The following is a 257-amino-acid chain: Imidazole glycerol phosphate synthase subunit HisF (257 aa).

Residues Asp-12 and Asp-131 contribute to the active site.

Belongs to the HisA/HisF family. Heterodimer of HisH and HisF.

The protein resides in the cytoplasm. It carries out the reaction 5-[(5-phospho-1-deoxy-D-ribulos-1-ylimino)methylamino]-1-(5-phospho-beta-D-ribosyl)imidazole-4-carboxamide + L-glutamine = D-erythro-1-(imidazol-4-yl)glycerol 3-phosphate + 5-amino-1-(5-phospho-beta-D-ribosyl)imidazole-4-carboxamide + L-glutamate + H(+). It participates in amino-acid biosynthesis; L-histidine biosynthesis; L-histidine from 5-phospho-alpha-D-ribose 1-diphosphate: step 5/9. IGPS catalyzes the conversion of PRFAR and glutamine to IGP, AICAR and glutamate. The HisF subunit catalyzes the cyclization activity that produces IGP and AICAR from PRFAR using the ammonia provided by the HisH subunit. This Rhodococcus opacus (strain B4) protein is Imidazole glycerol phosphate synthase subunit HisF.